A 361-amino-acid polypeptide reads, in one-letter code: Mitochondrial import receptor subunit TOM40 homolog (361 aa).

Over residues 1-10 (MGNVLAASSP) the composition is skewed to low complexity. The interval 1–71 (MGNVLAASSP…TASASGAAED (71 aa)) is disordered. Residues 11–36 (PAGPPPPPAPALVGLPPPPPSPPGFT) show a composition bias toward pro residues. Low complexity-rich tracts occupy residues 37 to 52 (LPPLGGSLGAGTSTSR) and 59 to 71 (GAATASASGAAED).

The protein belongs to the Tom40 family. In terms of assembly, forms part of the preprotein translocase complex of the outer mitochondrial membrane (TOM complex) which consists of at least 7 different proteins (TOMM5, TOMM6, TOMM7, TOMM20, TOMM22, TOMM40 and TOMM70). Interacts with mitochondrial targeting sequences. Interacts with TIMM29; linking the TIM22 complex to the TOM complex. Forms a complex with BCAP31 (via C-terminus) which mediates the translocation of components of the mitochondrial membrane respiratory chain NADH dehydrogenase (Complex I) from the cytosol to the mitochondria. Interacts (via N-terminus) with CYP1A1 (via mitochondrial targeting signal); this interaction is required for CYP1A1 translocation across the mitochondrial outer membrane.

It is found in the mitochondrion outer membrane. Channel-forming protein essential for import of protein precursors into mitochondria. Plays a role in the assembly of the mitochondrial membrane respiratory chain NADH dehydrogenase (Complex I) by forming a complex with BCAP31 and mediating the translocation of Complex I components from the cytosol to the mitochondria. The sequence is that of Mitochondrial import receptor subunit TOM40 homolog (TOMM40) from Homo sapiens (Human).